Reading from the N-terminus, the 257-residue chain is Type III pantothenate kinase (257 aa).

6 to 13 (DVGNTNTV) lines the ATP pocket. Substrate is bound by residues Y102 and 109–112 (GADR). The Proton acceptor role is filled by D111. Residue D131 participates in K(+) binding. T134 provides a ligand contact to ATP. Substrate is bound at residue T186.

It belongs to the type III pantothenate kinase family. In terms of assembly, homodimer. NH4(+) is required as a cofactor. K(+) serves as cofactor.

It localises to the cytoplasm. The enzyme catalyses (R)-pantothenate + ATP = (R)-4'-phosphopantothenate + ADP + H(+). The protein operates within cofactor biosynthesis; coenzyme A biosynthesis; CoA from (R)-pantothenate: step 1/5. Functionally, catalyzes the phosphorylation of pantothenate (Pan), the first step in CoA biosynthesis. This is Type III pantothenate kinase from Leptospira interrogans serogroup Icterohaemorrhagiae serovar copenhageni (strain Fiocruz L1-130).